An 80-amino-acid chain; its full sequence is MSQDATLEKVRSIVSEQLSVDAGEVKLESNFQNDLGADSLDTVELVMALEEAFDIEIPDEAAEGIATVGDAVKYIEDKQG.

Residues Asp4–Gln79 form the Carrier domain. Ser39 bears the O-(pantetheine 4'-phosphoryl)serine mark.

Belongs to the acyl carrier protein (ACP) family. In terms of processing, 4'-phosphopantetheine is transferred from CoA to a specific serine of apo-ACP by AcpS. This modification is essential for activity because fatty acids are bound in thioester linkage to the sulfhydryl of the prosthetic group.

Its subcellular location is the cytoplasm. It participates in lipid metabolism; fatty acid biosynthesis. In terms of biological role, carrier of the growing fatty acid chain in fatty acid biosynthesis. The chain is Acyl carrier protein from Prochlorococcus marinus (strain MIT 9211).